The primary structure comprises 474 residues: Mitochondrial import inner membrane translocase subunit TIM44-1 (474 aa).

The transit peptide at 1–54 (MAIRKIIRDLLITKQPLLRQLFHQRVLRANARSEFLPAIGYTSHRRFSVFTEFS) directs the protein to the mitochondrion. The stretch at 68-88 (ERTVKELKERTEEFKGVTEDL) forms a coiled coil. Over residues 132–143 (VKESFKLGKEEN) the composition is skewed to basic and acidic residues. Residues 132–165 (VKESFKLGKEENAESASSSGTRASQGEKQQSGST) are disordered. Positions 145–165 (ESASSSGTRASQGEKQQSGST) are enriched in polar residues.

The protein belongs to the Tim44 family. As to quaternary structure, probable component of the PAM complex at least composed of a mitochondrial HSP70 protein, TIMM44 and TIMM14. The complex interacts with the TIMM23 component of the TIM17:23 complex. As to expression, expressed in roots, flowers, young cotyledons and leaves.

The protein localises to the mitochondrion inner membrane. Functionally, essential component of the PAM complex, a complex required for the translocation of transit peptide-containing proteins from the inner membrane into the mitochondrial matrix in an ATP-dependent manner. Recruits mitochondrial HSP70 to drive protein translocation into the matrix using ATP as an energy source. The sequence is that of Mitochondrial import inner membrane translocase subunit TIM44-1 (TIM44-1) from Arabidopsis thaliana (Mouse-ear cress).